Here is a 605-residue protein sequence, read N- to C-terminus: DNA mismatch repair protein MutL (605 aa).

Belongs to the DNA mismatch repair MutL/HexB family.

This protein is involved in the repair of mismatches in DNA. It is required for dam-dependent methyl-directed DNA mismatch repair. May act as a 'molecular matchmaker', a protein that promotes the formation of a stable complex between two or more DNA-binding proteins in an ATP-dependent manner without itself being part of a final effector complex. This chain is DNA mismatch repair protein MutL, found in Methylocella silvestris (strain DSM 15510 / CIP 108128 / LMG 27833 / NCIMB 13906 / BL2).